A 248-amino-acid chain; its full sequence is Small ribosomal subunit protein uS3 (248 aa).

The KH type-2 domain maps to 38–106 (IREFLSEGLE…QVQLNILEVK (69 aa)). Over residues 214–229 (SLMNARDERPSRGGRR) the composition is skewed to basic and acidic residues. The interval 214-248 (SLMNARDERPSRGGRRERPRRGGARRQRAEKKQEG) is disordered. A compositionally biased stretch (basic residues) spans 230 to 242 (ERPRRGGARRQRA).

This sequence belongs to the universal ribosomal protein uS3 family. In terms of assembly, part of the 30S ribosomal subunit. Forms a tight complex with proteins S10 and S14.

Functionally, binds the lower part of the 30S subunit head. Binds mRNA in the 70S ribosome, positioning it for translation. This chain is Small ribosomal subunit protein uS3, found in Corynebacterium urealyticum (strain ATCC 43042 / DSM 7109).